We begin with the raw amino-acid sequence, 350 residues long: Decarboxylase iboD (350 aa).

Belongs to the phosphatidylserine decarboxylase family.

The protein operates within secondary metabolite biosynthesis. Functionally, decarboxylase; part of the gene cluster that mediates the biosynthesis of the psychoactive metabolites ibotenic acid and muscimol. The first committed step is glutamate hydroxylation by the 2-oxoglutarate-dependent dioxygenase iboH, and the last step is decarboxylation of ibotenic acid to muscimol by the decarboxylase iboD. The order of the intermediate reactions is somewhat ambiguous. IboA likely activates the carboxylic acid at position 5 to introduce an amide bond, and the flavin monooxygenase iboF generates the N-O bond. There are several options for the latter step. One option is that iboF directly hydroxylates the amide nitrogen formed by iboA to produce a hydroxamic acid species. Another option is that iboF hydroxylates an external N-containing compound, whose resulting N-O bond is subsequently introduced into the hydroxyglutamate scaffold. The paralogous PLP-dependent cystathionine gamma-synthase-like enzymes iboG1 and iboG2 are likely involved in substitution of the OH group at position 3 by the O-N moiety. The first cyclic intermediate is most probably tricholomic acid which is likely desaturated to ibotenic acid by the cytochrome P450 monooxygenase iboC. The sequence is that of Decarboxylase iboD from Amanita muscaria (strain Koide BX008).